Consider the following 420-residue polypeptide: MKIRLDKSLPGGEIAVPSSKSYTIRGLIAAAQANGQSRIISPLAADDTLASRQVLSGLGIDINTDAEAESWQLTGNTFKKPAGNLFCRESAATLRFMSAVCARLPFECRLLAGHSLMRRPMLPLIQALHQLGIEIETRGNTTVIKGGEITRSKVSLPGNISSQYVSALMLMAPACKSGLEIHLATPPASLPYLKMTKQTLESFGIKAYTSIDWQEISIPPQPYLPARYRVEGDWSSASSFLALGAIAAPLFISNLDTESFQADRIMIKFLSEMGAEVESGQNWVKVSPKPLTAIQADLTHSIDLLPALAITAACAKGQSILSGVRQARIKESNRIRAVSQGLSAMGINVTEEDDRLIIEGGMPRGAEIDSLGDHRIAMAFGALGAVTGETCISEAECVSKTYPDFWQKLESLGGKVIKDV.

Lys20, Ser21, and Arg25 together coordinate 3-phosphoshikimate. Lys20 provides a ligand contact to phosphoenolpyruvate. A phosphoenolpyruvate-binding site is contributed by Arg119. 7 residues coordinate 3-phosphoshikimate: Ser161, Ser162, Gln163, Ser189, Asp303, Gln326, and Lys330. Gln163 is a phosphoenolpyruvate binding site. The Proton acceptor role is filled by Asp303. Phosphoenolpyruvate is bound by residues Arg334, Arg375, and Lys400.

It belongs to the EPSP synthase family. As to quaternary structure, monomer.

Its subcellular location is the cytoplasm. It carries out the reaction 3-phosphoshikimate + phosphoenolpyruvate = 5-O-(1-carboxyvinyl)-3-phosphoshikimate + phosphate. It functions in the pathway metabolic intermediate biosynthesis; chorismate biosynthesis; chorismate from D-erythrose 4-phosphate and phosphoenolpyruvate: step 6/7. In terms of biological role, catalyzes the transfer of the enolpyruvyl moiety of phosphoenolpyruvate (PEP) to the 5-hydroxyl of shikimate-3-phosphate (S3P) to produce enolpyruvyl shikimate-3-phosphate and inorganic phosphate. The protein is 3-phosphoshikimate 1-carboxyvinyltransferase of Dehalococcoides mccartyi (strain ATCC BAA-2266 / KCTC 15142 / 195) (Dehalococcoides ethenogenes (strain 195)).